Here is a 444-residue protein sequence, read N- to C-terminus: ATP-dependent protease ATPase subunit HslU (444 aa).

ATP contacts are provided by residues Ile18, 60–65 (GVGKTE), Asp256, Glu321, and Arg393.

It belongs to the ClpX chaperone family. HslU subfamily. A double ring-shaped homohexamer of HslV is capped on each side by a ring-shaped HslU homohexamer. The assembly of the HslU/HslV complex is dependent on binding of ATP.

It is found in the cytoplasm. Its function is as follows. ATPase subunit of a proteasome-like degradation complex; this subunit has chaperone activity. The binding of ATP and its subsequent hydrolysis by HslU are essential for unfolding of protein substrates subsequently hydrolyzed by HslV. HslU recognizes the N-terminal part of its protein substrates and unfolds these before they are guided to HslV for hydrolysis. This is ATP-dependent protease ATPase subunit HslU from Buchnera aphidicola subsp. Baizongia pistaciae (strain Bp).